The chain runs to 406 residues: 3-isopropylmalate dehydrogenase, chloroplastic (406 aa).

The N-terminal 34 residues, 1–34, are a transit peptide targeting the chloroplast; the sequence is MAAALQTNIRPVKFPATLRALTKQSSPAPFRVRC. Serine 71 is subject to Phosphoserine. An NAD(+)-binding site is contributed by 117–130; it reads GYKWDKNEKHLKPE. Substrate contacts are provided by arginine 137, arginine 147, arginine 175, and aspartate 265. The Mg(2+) site is built by aspartate 265, aspartate 289, and aspartate 293. 323 to 335 provides a ligand contact to NAD(+); it reads GSAPDIAGQDKAN.

This sequence belongs to the isocitrate and isopropylmalate dehydrogenases family. In terms of assembly, homodimer. Requires Mg(2+) as cofactor. Mn(2+) serves as cofactor.

The protein localises to the plastid. Its subcellular location is the chloroplast. It catalyses the reaction (2R,3S)-3-isopropylmalate + NAD(+) = 4-methyl-2-oxopentanoate + CO2 + NADH. The protein operates within amino-acid biosynthesis; L-leucine biosynthesis; L-leucine from 3-methyl-2-oxobutanoate: step 3/4. Catalyzes the oxidation of 3-carboxy-2-hydroxy-4-methylpentanoate (3-isopropylmalate) to 3-carboxy-4-methyl-2-oxopentanoate. The product decarboxylates to 4-methyl-2 oxopentanoate. This chain is 3-isopropylmalate dehydrogenase, chloroplastic, found in Brassica napus (Rape).